We begin with the raw amino-acid sequence, 629 residues long: Forkhead box protein O (629 aa).

A Phosphothreonine; by PKB/AKT1 modification is found at T49. S78 bears the Phosphoserine mark. The fork-head DNA-binding region spans 98-204 (WGNLSYADLI…ETSRYEKRRG (107 aa)). 5 disordered regions span residues 185 to 208 (KSVR…RAKK), 220 to 274 (GLND…SPIR), 321 to 368 (QQQF…QTLQ), 394 to 417 (SPNS…DSLN), and 563 to 597 (QHLQ…NSSL). S193 carries the phosphoserine; by PKB/AKT1 modification. Polar residues-rich tracts occupy residues 224-233 (ATPSPSSSVS) and 259-268 (RASSNASSCG). At S262 the chain carries Phosphoserine; by PKB/AKT1. Phosphoserine occurs at positions 265, 266, and 271. Pro residues predominate over residues 332 to 341 (SQPPPPPYQP). The segment covering 342–356 (PQLQQQQQQQPSYSL) has biased composition (low complexity). Residues 394–403 (SPNSVTTTMS) show a composition bias toward polar residues.

Interacts with melt.

It is found in the cytoplasm. The protein localises to the nucleus. In terms of biological role, transcription factor involved in the regulation of the insulin signaling pathway. Consistently activates both the downstream target Thor\d4EBP and the feedback control target InR. Involved in negative regulation of the cell cycle, modulating cell growth and proliferation. In response to cellular stresses, such as nutrient deprivation or increased levels of reactive oxygen species, foxo is activated and inhibits growth through the action of target genes such as Thor. Foxo activated in the adult fat body can regulate lifespan in adults; an insulin peptide itself may function as one secondary messenger of insulin-regulated aging. Also regulates Lip4, homolog of human acid lipases, thereby acting as a key modulator of lipid metabolism by insulin signaling and integrates insulin responses to glucose and lipid homeostasis. This is Forkhead box protein O from Drosophila persimilis (Fruit fly).